We begin with the raw amino-acid sequence, 212 residues long: Peptide methionine sulfoxide reductase MsrA (212 aa).

Cysteine 52 is an active-site residue.

The protein belongs to the MsrA Met sulfoxide reductase family.

The catalysed reaction is L-methionyl-[protein] + [thioredoxin]-disulfide + H2O = L-methionyl-(S)-S-oxide-[protein] + [thioredoxin]-dithiol. It catalyses the reaction [thioredoxin]-disulfide + L-methionine + H2O = L-methionine (S)-S-oxide + [thioredoxin]-dithiol. Functionally, has an important function as a repair enzyme for proteins that have been inactivated by oxidation. Catalyzes the reversible oxidation-reduction of methionine sulfoxide in proteins to methionine. The protein is Peptide methionine sulfoxide reductase MsrA of Shigella boydii serotype 18 (strain CDC 3083-94 / BS512).